A 231-amino-acid chain; its full sequence is Acyl-protein thioesterase 1 (231 aa).

Active-site charge relay system residues include S121, D178, and H211.

The protein belongs to the AB hydrolase superfamily. AB hydrolase 2 family.

It is found in the cytoplasm. The protein localises to the nucleus. It carries out the reaction S-hexadecanoyl-L-cysteinyl-[protein] + H2O = L-cysteinyl-[protein] + hexadecanoate + H(+). Hydrolyzes fatty acids from S-acylated cysteine residues in proteins with a strong preference for palmitoylated G-alpha proteins over other acyl substrates. Mediates the deacylation of G-alpha proteins such as GPA1 in vivo, but has weak or no activity toward palmitoylated Ras proteins. Has weak lysophospholipase activity in vitro; however such activity may not exist in vivo. The polypeptide is Acyl-protein thioesterase 1 (Candida albicans (strain SC5314 / ATCC MYA-2876) (Yeast)).